Reading from the N-terminus, the 258-residue chain is Pimeloyl-[acyl-carrier protein] methyl ester esterase (258 aa).

Substrate contacts are provided by residues Trp-22, 84–85 (SL), and 145–149 (FLAIQ). The active-site Nucleophile is the Ser-84. Residues Asp-209 and His-238 contribute to the active site. Residue His-238 participates in substrate binding.

Belongs to the AB hydrolase superfamily. Carboxylesterase BioH family. In terms of assembly, monomer.

It is found in the cytoplasm. It carries out the reaction 6-carboxyhexanoyl-[ACP] methyl ester + H2O = 6-carboxyhexanoyl-[ACP] + methanol + H(+). The protein operates within cofactor biosynthesis; biotin biosynthesis. The physiological role of BioH is to remove the methyl group introduced by BioC when the pimeloyl moiety is complete. It allows to synthesize pimeloyl-ACP via the fatty acid synthetic pathway through the hydrolysis of the ester bonds of pimeloyl-ACP esters. The polypeptide is Pimeloyl-[acyl-carrier protein] methyl ester esterase (Pseudoalteromonas atlantica (strain T6c / ATCC BAA-1087)).